The chain runs to 320 residues: Pseudouridine-5'-phosphate glycosidase (320 aa).

Residue Glu-25 is the Proton donor of the active site. 2 residues coordinate substrate: Lys-85 and Val-105. Residue Asp-137 participates in Mn(2+) binding. 139–141 (SAD) contacts substrate. Lys-158 (nucleophile) is an active-site residue.

It belongs to the pseudouridine-5'-phosphate glycosidase family. Homotrimer. It depends on Mn(2+) as a cofactor.

It catalyses the reaction D-ribose 5-phosphate + uracil = psi-UMP + H2O. Catalyzes the reversible cleavage of pseudouridine 5'-phosphate (PsiMP) to ribose 5-phosphate and uracil. Functions biologically in the cleavage direction, as part of a pseudouridine degradation pathway. The sequence is that of Pseudouridine-5'-phosphate glycosidase from Rhodospirillum centenum (strain ATCC 51521 / SW).